The sequence spans 695 residues: Exocyst complex component EXO70C2 (695 aa).

Residues 1–36 (MEKNDKDPDHDDKSKGDEKGDVVSDAHPSDDAHHQD) show a composition bias toward basic and acidic residues. 2 disordered regions span residues 1–71 (MEKN…EEAP) and 210–229 (VVTD…QDHQ). Thr212 carries the phosphothreonine modification. 2 positions are modified to phosphoserine: Ser215 and Ser217. Thr446 is subject to Phosphothreonine. Phosphoserine is present on residues Ser494 and Ser605.

The protein belongs to the EXO70 family. In terms of assembly, interacts with ROH1A and ROH1D independently of its phosphorylation status. Post-translationally, phosphorylation on Ser and Thr residues promotes its ability to repress pollen tube growth and to regulate cellular architecture at the pollen tube tip. As to expression, expressed in anthers, pollen and root trichoblast cells. Also observed in anther tapetum.

It is found in the cytoplasm. Functionally, required for optimal tip growth of pollen tube; dose-dependent negative regulator of exocyst function in pollen tube growth and cellular architecture at the pollen tube tip, probably by modulating membrane trafficking and exocytosis dynamics. This chain is Exocyst complex component EXO70C2, found in Arabidopsis thaliana (Mouse-ear cress).